Here is a 295-residue protein sequence, read N- to C-terminus: Phosphoribosylaminoimidazole-succinocarboxamide synthase (295 aa).

It belongs to the SAICAR synthetase family.

It carries out the reaction 5-amino-1-(5-phospho-D-ribosyl)imidazole-4-carboxylate + L-aspartate + ATP = (2S)-2-[5-amino-1-(5-phospho-beta-D-ribosyl)imidazole-4-carboxamido]succinate + ADP + phosphate + 2 H(+). The protein operates within purine metabolism; IMP biosynthesis via de novo pathway; 5-amino-1-(5-phospho-D-ribosyl)imidazole-4-carboxamide from 5-amino-1-(5-phospho-D-ribosyl)imidazole-4-carboxylate: step 1/2. In Desulforapulum autotrophicum (strain ATCC 43914 / DSM 3382 / VKM B-1955 / HRM2) (Desulfobacterium autotrophicum), this protein is Phosphoribosylaminoimidazole-succinocarboxamide synthase.